The following is a 307-amino-acid chain: Homoserine kinase (307 aa).

Position 85 to 95 (85 to 95 (PLTRGLGSSAA)) interacts with ATP.

Belongs to the GHMP kinase family. Homoserine kinase subfamily.

It localises to the cytoplasm. It catalyses the reaction L-homoserine + ATP = O-phospho-L-homoserine + ADP + H(+). Its pathway is amino-acid biosynthesis; L-threonine biosynthesis; L-threonine from L-aspartate: step 4/5. Functionally, catalyzes the ATP-dependent phosphorylation of L-homoserine to L-homoserine phosphate. This is Homoserine kinase from Caldicellulosiruptor bescii (strain ATCC BAA-1888 / DSM 6725 / KCTC 15123 / Z-1320) (Anaerocellum thermophilum).